The following is a 573-amino-acid chain: Splicing factor U2af large subunit B (573 aa).

The segment covering 1–12 (MPDYEGNGEDID) has biased composition (acidic residues). Positions 1–187 (MPDYEGNGED…DMAPPTSAML (187 aa)) are disordered. A compositionally biased stretch (basic and acidic residues) spans 38–145 (SDSKSQHSSR…QREHAKDRES (108 aa)). The span at 161–173 (SRSRSRSRSKSKR) shows a compositional bias: basic residues. RRM domains are found at residues 239–322 (RRVY…RPSD), 359–437 (DRIF…RANQ), and 478–564 (EVIS…YPEN).

It belongs to the splicing factor SR family. In terms of tissue distribution, expressed in stems, leaves and apical buds.

The protein resides in the nucleus. Its function is as follows. Necessary for the splicing of pre-mRNA. Binds to the U -enriched regions of plant introns. The protein is Splicing factor U2af large subunit B (U2AF65B) of Nicotiana plumbaginifolia (Leadwort-leaved tobacco).